We begin with the raw amino-acid sequence, 241 residues long: tRNA pseudouridine synthase B (241 aa).

The active-site Nucleophile is the D45.

This sequence belongs to the pseudouridine synthase TruB family. Type 1 subfamily.

The enzyme catalyses uridine(55) in tRNA = pseudouridine(55) in tRNA. Its function is as follows. Responsible for synthesis of pseudouridine from uracil-55 in the psi GC loop of transfer RNAs. The polypeptide is tRNA pseudouridine synthase B (Chlamydia trachomatis serovar L2 (strain ATCC VR-902B / DSM 19102 / 434/Bu)).